A 254-amino-acid polypeptide reads, in one-letter code: Imidazole glycerol phosphate synthase subunit HisF (254 aa).

Active-site residues include Asp12 and Asp131.

This sequence belongs to the HisA/HisF family. Heterodimer of HisH and HisF.

Its subcellular location is the cytoplasm. It carries out the reaction 5-[(5-phospho-1-deoxy-D-ribulos-1-ylimino)methylamino]-1-(5-phospho-beta-D-ribosyl)imidazole-4-carboxamide + L-glutamine = D-erythro-1-(imidazol-4-yl)glycerol 3-phosphate + 5-amino-1-(5-phospho-beta-D-ribosyl)imidazole-4-carboxamide + L-glutamate + H(+). Its pathway is amino-acid biosynthesis; L-histidine biosynthesis; L-histidine from 5-phospho-alpha-D-ribose 1-diphosphate: step 5/9. Functionally, IGPS catalyzes the conversion of PRFAR and glutamine to IGP, AICAR and glutamate. The HisF subunit catalyzes the cyclization activity that produces IGP and AICAR from PRFAR using the ammonia provided by the HisH subunit. This chain is Imidazole glycerol phosphate synthase subunit HisF, found in Desulfitobacterium hafniense (strain Y51).